Here is a 160-residue protein sequence, read N- to C-terminus: Large ribosomal subunit protein uL22c (160 aa).

It belongs to the universal ribosomal protein uL22 family. In terms of assembly, part of the 50S ribosomal subunit.

The protein localises to the plastid. The protein resides in the chloroplast. Its function is as follows. This protein binds specifically to 23S rRNA. In terms of biological role, the globular domain of the protein is located near the polypeptide exit tunnel on the outside of the subunit, while an extended beta-hairpin is found that lines the wall of the exit tunnel in the center of the 70S ribosome. The protein is Large ribosomal subunit protein uL22c (rpl22) of Arabidopsis thaliana (Mouse-ear cress).